Reading from the N-terminus, the 517-residue chain is Maturase K (517 aa).

It belongs to the intron maturase 2 family. MatK subfamily.

The protein resides in the plastid. The protein localises to the chloroplast. Its function is as follows. Usually encoded in the trnK tRNA gene intron. Probably assists in splicing its own and other chloroplast group II introns. The polypeptide is Maturase K (Palhinhaea cernua (Nodding clubmoss)).